Here is a 143-residue protein sequence, read N- to C-terminus: Deoxyuridine 5'-triphosphate nucleotidohydrolase (143 aa).

Substrate-binding positions include 62 to 64 (RSG), Asn75, 79 to 81 (TID), and Lys89.

Belongs to the dUTPase family. Mg(2+) is required as a cofactor.

The enzyme catalyses dUTP + H2O = dUMP + diphosphate + H(+). It participates in pyrimidine metabolism; dUMP biosynthesis; dUMP from dCTP (dUTP route): step 2/2. Its function is as follows. This enzyme is involved in nucleotide metabolism: it produces dUMP, the immediate precursor of thymidine nucleotides and it decreases the intracellular concentration of dUTP so that uracil cannot be incorporated into DNA. The protein is Deoxyuridine 5'-triphosphate nucleotidohydrolase of Clostridium kluyveri (strain ATCC 8527 / DSM 555 / NBRC 12016 / NCIMB 10680 / K1).